A 193-amino-acid polypeptide reads, in one-letter code: MAKLYFYYSTMNAGKSTTLLQSSYNYRERDMSTLVYTAAIDDRFGVGKVTSRIGISQDAFLFRSETNLFDEINEHLKKEKVHCVLVDEAQFLSKQQVYQLSDVVDKLKIPVLCYGLRTDFQAELFEGSKYLLAWADQLEELKTICYCGRKANFVLRLNDQGEVIKEGAQIQIGGNDSYLSVCRLHYKEKCGQI.

Residues 9–16 and 87–90 contribute to the ATP site; these read STMNAGKS and DEAQ. The Proton acceptor role is filled by E88. Residues C145, C147, C182, and H185 each coordinate Zn(2+).

This sequence belongs to the thymidine kinase family. Homotetramer.

The protein resides in the cytoplasm. It carries out the reaction thymidine + ATP = dTMP + ADP + H(+). The polypeptide is Thymidine kinase (Haemophilus influenzae (strain 86-028NP)).